The primary structure comprises 652 residues: Probable L-type lectin-domain containing receptor kinase S.5 (652 aa).

The N-terminal stretch at 1–20 (MRFSLAWKLLFLILTCKIET) is a signal peptide. The Extracellular portion of the chain corresponds to 21–266 (QVKCLKFDFP…EGLKIDGDGN (246 aa)). Residues 24 to 257 (CLKFDFPGFN…LNCVRSWSFE (234 aa)) form a legume-lectin like region. 8 N-linked (GlcNAc...) asparagine glycosylation sites follow: N33, N91, N97, N100, N122, N139, N201, and N244. Residues 267–287 (MLWLWITIPIVFIVGIGAFLG) form a helical membrane-spanning segment. Over 288-652 (ALYLRSRSKA…INSLTELTGR (365 aa)) the chain is Cytoplasmic. Residues 330–622 (FGAENKLGQG…PDVPTERPAF (293 aa)) form the Protein kinase domain. ATP-binding positions include 336-344 (LGQGGFGMV) and K357. The active-site Proton acceptor is the D455.

It in the C-terminal section; belongs to the protein kinase superfamily. Ser/Thr protein kinase family. In the N-terminal section; belongs to the leguminous lectin family.

It is found in the cell membrane. The enzyme catalyses L-seryl-[protein] + ATP = O-phospho-L-seryl-[protein] + ADP + H(+). It catalyses the reaction L-threonyl-[protein] + ATP = O-phospho-L-threonyl-[protein] + ADP + H(+). This is Probable L-type lectin-domain containing receptor kinase S.5 (LECRKS5) from Arabidopsis thaliana (Mouse-ear cress).